The primary structure comprises 167 residues: Phosphopantetheine adenylyltransferase (167 aa).

Substrate is bound at residue Thr-9. Residues 9–10 (TF) and His-17 each bind ATP. Residues Lys-41, Leu-73, and Arg-87 each contribute to the substrate site. Residues 88 to 90 (GLR), Glu-98, and 123 to 129 (YQFISGT) contribute to the ATP site.

Belongs to the bacterial CoaD family. Homohexamer. Requires Mg(2+) as cofactor.

The protein localises to the cytoplasm. It carries out the reaction (R)-4'-phosphopantetheine + ATP + H(+) = 3'-dephospho-CoA + diphosphate. It functions in the pathway cofactor biosynthesis; coenzyme A biosynthesis; CoA from (R)-pantothenate: step 4/5. Reversibly transfers an adenylyl group from ATP to 4'-phosphopantetheine, yielding dephospho-CoA (dPCoA) and pyrophosphate. This Ralstonia pickettii (strain 12J) protein is Phosphopantetheine adenylyltransferase.